A 180-amino-acid polypeptide reads, in one-letter code: Regulator of G-protein signaling 8 (180 aa).

Serine 26 carries the post-translational modification Phosphoserine. Residues 56–171 (SFDVLLSHKY…FLRSKMYLDL (116 aa)) enclose the RGS domain.

As to quaternary structure, interacts with GNAO1 and GNAI3.

It is found in the cell membrane. The protein localises to the membrane. It localises to the perikaryon. The protein resides in the cell projection. Its subcellular location is the dendrite. It is found in the nucleus. Regulates G protein-coupled receptor signaling cascades, including signaling via muscarinic acetylcholine receptor CHRM2 and dopamine receptor DRD2. Inhibits signal transduction by increasing the GTPase activity of G protein alpha subunits, thereby driving them into their inactive GDP-bound form. Modulates the activity of potassium channels that are activated in response to DRD2 and CHRM2 signaling. This Mus musculus (Mouse) protein is Regulator of G-protein signaling 8 (Rgs8).